Here is a 201-residue protein sequence, read N- to C-terminus: Recombination protein RecR (201 aa).

The C4-type zinc-finger motif lies at 60 to 75 (CHACGNVDTSDPCTIC). Residues 83–178 (TTLVVVEDVS…TITRLAHGVP (96 aa)) form the Toprim domain.

It belongs to the RecR family.

May play a role in DNA repair. It seems to be involved in an RecBC-independent recombinational process of DNA repair. It may act with RecF and RecO. This chain is Recombination protein RecR, found in Methylorubrum populi (strain ATCC BAA-705 / NCIMB 13946 / BJ001) (Methylobacterium populi).